Reading from the N-terminus, the 480-residue chain is RNA-splicing ligase RtcB homolog (480 aa).

Mn(2+) is bound by residues D93, C96, H202, H234, and H328. 201-205 contacts GMP; the sequence is NHYTE. Residues 328 to 329, 377 to 380, S384, 403 to 406, and K479 each bind GMP; these read HN, GGTM, and HGAG. H403 (GMP-histidine intermediate) is an active-site residue.

Belongs to the RtcB family. In terms of assembly, catalytic component of the tRNA-splicing ligase complex. Requires Mn(2+) as cofactor.

It catalyses the reaction a 3'-end 3'-phospho-ribonucleotide-RNA + a 5'-end dephospho-ribonucleoside-RNA + GTP = a ribonucleotidyl-ribonucleotide-RNA + GMP + diphosphate. The catalysed reaction is a 3'-end 2',3'-cyclophospho-ribonucleotide-RNA + a 5'-end dephospho-ribonucleoside-RNA + GTP + H2O = a ribonucleotidyl-ribonucleotide-RNA + GMP + diphosphate + H(+). Functionally, catalytic subunit of the tRNA-splicing ligase complex that acts by directly joining spliced tRNA halves to mature-sized tRNAs by incorporating the precursor-derived splice junction phosphate into the mature tRNA as a canonical 3',5'-phosphodiester. May act as an RNA ligase with broad substrate specificity, and may function toward other RNAs. This is RNA-splicing ligase RtcB homolog from Thalassiosira pseudonana (Marine diatom).